A 393-amino-acid chain; its full sequence is S-adenosylmethionine synthase (393 aa).

Glutamate 9 serves as a coordination point for Mg(2+). Histidine 15 is an ATP binding site. Aspartate 17 provides a ligand contact to Mg(2+). Residue glutamate 43 coordinates K(+). Glutamate 56 and glutamine 99 together coordinate L-methionine. ATP contacts are provided by residues 167 to 169 (DGK), 235 to 238 (SGRF), aspartate 246, 252 to 253 (RK), alanine 269, lysine 273, and lysine 277. Residue aspartate 246 coordinates L-methionine. An L-methionine-binding site is contributed by lysine 277.

Belongs to the AdoMet synthase family. Homotetramer; dimer of dimers. It depends on Mn(2+) as a cofactor. Requires Mg(2+) as cofactor. Co(2+) is required as a cofactor. The cofactor is K(+).

The protein localises to the cytoplasm. The catalysed reaction is L-methionine + ATP + H2O = S-adenosyl-L-methionine + phosphate + diphosphate. It participates in amino-acid biosynthesis; S-adenosyl-L-methionine biosynthesis; S-adenosyl-L-methionine from L-methionine: step 1/1. Increased activity in the presence of 25 percent acetonitrile, methanol or dimethylformamide. Its function is as follows. Catalyzes the formation of S-adenosylmethionine from methionine and ATP. The polypeptide is S-adenosylmethionine synthase (Acacia koa (Koa tree)).